The sequence spans 129 residues: Small ribosomal subunit protein uS11 (129 aa).

The protein belongs to the universal ribosomal protein uS11 family. As to quaternary structure, part of the 30S ribosomal subunit. Interacts with proteins S7 and S18. Binds to IF-3.

Its function is as follows. Located on the platform of the 30S subunit, it bridges several disparate RNA helices of the 16S rRNA. Forms part of the Shine-Dalgarno cleft in the 70S ribosome. The chain is Small ribosomal subunit protein uS11 from Francisella tularensis subsp. tularensis (strain FSC 198).